A 489-amino-acid polypeptide reads, in one-letter code: Cobyric acid synthase (489 aa).

Residues 252-441 (ALTIGVIQLP…IHGIFANTEF (190 aa)) enclose the GATase cobBQ-type domain. Residue Cys-330 is the Nucleophile of the active site. His-433 is a catalytic residue.

It belongs to the CobB/CobQ family. CobQ subfamily.

It functions in the pathway cofactor biosynthesis; adenosylcobalamin biosynthesis. In terms of biological role, catalyzes amidations at positions B, D, E, and G on adenosylcobyrinic A,C-diamide. NH(2) groups are provided by glutamine, and one molecule of ATP is hydrogenolyzed for each amidation. In Herpetosiphon aurantiacus (strain ATCC 23779 / DSM 785 / 114-95), this protein is Cobyric acid synthase.